Reading from the N-terminus, the 352-residue chain is Outer membrane protein assembly factor BamC (352 aa).

The signal sequence occupies residues 1-24; sequence MAISLQKSTVVKVVGVSLVMLLAA. Residue Cys25 is the site of N-palmitoyl cysteine attachment. Cys25 carries the S-diacylglycerol cysteine lipid modification.

It belongs to the BamC family. Part of the Bam complex, which is composed of the outer membrane protein BamA, and four lipoproteins BamB, BamC, BamD and BamE.

It localises to the cell outer membrane. In terms of biological role, part of the outer membrane protein assembly complex, which is involved in assembly and insertion of beta-barrel proteins into the outer membrane. This is Outer membrane protein assembly factor BamC from Yersinia pestis.